The following is a 191-amino-acid chain: Adenylate kinase (191 aa).

12–17 (GSGKTT) lines the ATP pocket. The NMP stretch occupies residues 33 to 62 (STGDLLRAEVASGSELGKLIDSFISKGNLV). AMP-binding positions include Thr34, Arg39, 60–62 (NLV), 87–90 (GYPR), and Gln94. The interval 129 to 135 (GRARGAD) is LID. An ATP-binding site is contributed by Arg130. AMP-binding residues include Arg132 and Arg144. Arg172 is a binding site for ATP.

The protein belongs to the adenylate kinase family. In terms of assembly, monomer.

Its subcellular location is the cytoplasm. The catalysed reaction is AMP + ATP = 2 ADP. It participates in purine metabolism; AMP biosynthesis via salvage pathway; AMP from ADP: step 1/1. Catalyzes the reversible transfer of the terminal phosphate group between ATP and AMP. Plays an important role in cellular energy homeostasis and in adenine nucleotide metabolism. The polypeptide is Adenylate kinase (Campylobacter fetus subsp. fetus (strain 82-40)).